The sequence spans 211 residues: MGQKVHPIGFRIGVTQTHRSQWFAKPKDYAKLVEEDLLIREFAESRLPDAGISRINISRQVDRIEIEFFTARPRALVGAKGETLTQLRDEIKAKLPDTRNVALYVTKTQQPEMEAICIAENIAEQLEKRTPFRRTMRQAIMRARKAGAEGIKIQISGRLNGAEIARHEWAREGRVPLHTIRADIDYATARAQTIYGILGIKVWVCKGEKSC.

The KH type-2 domain occupies 39 to 109; sequence IREFAESRLP…NVALYVTKTQ (71 aa).

It belongs to the universal ribosomal protein uS3 family. In terms of assembly, part of the 30S ribosomal subunit.

Its subcellular location is the plastid. The protein localises to the chloroplast. The chain is Small ribosomal subunit protein uS3c (rps3) from Ostreococcus tauri.